Here is a 116-residue protein sequence, read N- to C-terminus: Prefoldin subunit beta (116 aa).

The protein belongs to the prefoldin subunit beta family. Heterohexamer of two alpha and four beta subunits.

It is found in the cytoplasm. Functionally, molecular chaperone capable of stabilizing a range of proteins. Seems to fulfill an ATP-independent, HSP70-like function in archaeal de novo protein folding. This is Prefoldin subunit beta (pfdB) from Archaeoglobus fulgidus (strain ATCC 49558 / DSM 4304 / JCM 9628 / NBRC 100126 / VC-16).